Here is a 357-residue protein sequence, read N- to C-terminus: MADAATIAKLDEGFKKLEAATDCKSLLKKYLTKDVFEQLKAKKTKLGATLLDVIQSGVENLDSGVGVYAPDAEAYTLFSPLFDPIIEDYHKGFKQTDKHPNKDFGDVTQFVNVDPDGKFVISTRVRCGRSMEGYPFNPCLTEAQYKEMESKVSSTLSNLEGELKGTYFPLTGMTKEVQQKLIDDHFLFKEGDRFLQAANACRYWPAGRGIYHNDNKTFLVWCNEEDHLRIISMQMGGDLGQVYRRLVSAVNEIEKRVPFSHHDRLGFLTFCPTNLGTTVRASVHIKLPKLAANREKLEEVAGRYSLQVRGTRGEHTEAEGGIYDISNKRRMGLTEFQAVKEMQDGILELIKIEKEMQ.

Position 2 is an N-acetylalanine (A2). Residues 9–91 (KLDEGFKKLE…FDPIIEDYHK (83 aa)) enclose the Phosphagen kinase N-terminal domain. 64 to 68 (GVGVY) is a binding site for L-arginine. The Phosphagen kinase C-terminal domain occupies 119–356 (FVISTRVRCG…LELIKIEKEM (238 aa)). Residues 122-126 (STRVR) and H185 contribute to the ATP site. Residue E225 coordinates L-arginine. An ATP-binding site is contributed by R229. C271 lines the L-arginine pocket. ATP is bound by residues 280–284 (RASVH) and 309–314 (RGTRGE). Position 314 (E314) interacts with L-arginine.

The protein belongs to the ATP:guanido phosphotransferase family.

The enzyme catalyses L-arginine + ATP = N(omega)-phospho-L-arginine + ADP + H(+). The chain is Arginine kinase from Eriocheir sinensis (Chinese mitten crab).